The following is a 927-amino-acid chain: Probable UDP-N-acetylglucosamine--peptide N-acetylglucosaminyltransferase SPINDLY (927 aa).

Residues 1 to 31 (MGRPGMDSSEGRESNGVVPERNGGAVPAKQQ) form a disordered region. TPR repeat units follow at residues 34-67 (GKDT…DEAN), 68-101 (VEAL…DPGN), 102-135 (ACAL…DPSY), 143-176 (AIVL…DSHY), 177-210 (APAY…RPLY), 211-244 (AEAY…SPNF), 252-285 (AIAL…NWHY), 286-319 (ADAM…NPRC), 320-353 (AEAC…KPNF), 355-387 (QSLN…NSTY), and 388-421 (AEAY…DPDS). The interval 422 to 927 (RNAGQNRLLA…KVEANGHISR (506 aa)) is catalytic region.

This sequence belongs to the glycosyltransferase 41 family. O-GlcNAc transferase subfamily.

Its subcellular location is the nucleus. The enzyme catalyses L-seryl-[protein] + UDP-N-acetyl-alpha-D-glucosamine = 3-O-(N-acetyl-beta-D-glucosaminyl)-L-seryl-[protein] + UDP + H(+). The catalysed reaction is L-threonyl-[protein] + UDP-N-acetyl-alpha-D-glucosamine = 3-O-(N-acetyl-beta-D-glucosaminyl)-L-threonyl-[protein] + UDP + H(+). It functions in the pathway protein modification; protein glycosylation. In terms of biological role, probable O-linked N-acetylglucosamine transferase (OGT) involved in various processes such as gibberellin (GA) signaling pathway. OGTs catalyze the addition of nucleotide-activated sugars directly onto the polypeptide through O-glycosidic linkage with the hydroxyl of serine or threonine. Probably acts by adding O-linked sugars to yet unknown proteins. This Oryza sativa subsp. japonica (Rice) protein is Probable UDP-N-acetylglucosamine--peptide N-acetylglucosaminyltransferase SPINDLY (SPY).